Here is a 1617-residue protein sequence, read N- to C-terminus: Mitogen-activated protein kinase kinae kinase bck1 (1617 aa).

9 disordered regions span residues 1-73 (MDGQ…SQLQ), 167-199 (GPVH…RTMP), 211-253 (SVAS…GGMS), 345-399 (RQIH…SPNL), 455-555 (DHRR…SSSY), 568-633 (KRSK…LRGK), 739-820 (GVPL…ISPE), 832-1144 (EHKR…RGDI), and 1165-1277 (IDLD…EILR). The segment covering 19–28 (TQPSQSHMLS) has biased composition (low complexity). Residues 44–60 (VMPPPPPGPPPGPPPGP) show a composition bias toward pro residues. Positions 220 to 248 (TAQNHQSQTGQTNEPTKSPSHRQNNSNTL) are enriched in polar residues. Residues 482–504 (KSGSPATQHATLNQGLSSSSTGD) are compositionally biased toward polar residues. The span at 524 to 533 (RYYESRKGQE) shows a compositional bias: basic and acidic residues. 2 stretches are compositionally biased toward polar residues: residues 535 to 555 (IRPS…SSSY) and 586 to 596 (ESPTSPVNLRQ). Composition is skewed to basic and acidic residues over residues 832-841 (EHKREVERKQ) and 871-885 (FDER…KKAD). 2 stretches are compositionally biased toward polar residues: residues 897-907 (PQESYTLTRIN) and 956-980 (GGKQ…PQSS). 2 stretches are compositionally biased toward basic and acidic residues: residues 1128–1140 (EDER…DSFA) and 1189–1198 (PENDLHKKEN). 2 stretches are compositionally biased toward polar residues: residues 1199–1208 (QPSSSYTGEM) and 1257–1272 (NQAS…NQKS). Residues 1323–1596 (IIRGQLIGKG…QTLLTRHPFC (274 aa)) enclose the Protein kinase domain. ATP contacts are provided by residues 1329 to 1337 (IGKGTYGRV) and Lys1352.

It belongs to the protein kinase superfamily. STE Ser/Thr protein kinase family. MAP kinase kinase kinase subfamily.

It carries out the reaction L-seryl-[protein] + ATP = O-phospho-L-seryl-[protein] + ADP + H(+). It catalyses the reaction L-threonyl-[protein] + ATP = O-phospho-L-threonyl-[protein] + ADP + H(+). Functionally, mitogen-activated protein kinase kinase kinase; part of cell wall integrity (CWI) signaling pathway composed of pkcA, the bck1-mkk2-mpka MAPK cascade and the downstream rlmA transcription regulator. The CWI signaling pathway regulates cell wall integrity and pyomelanin formation. CWI also controls oxidative stress response, gliotoxin production, iron adaptation and asexual development. Finally, CWI is constitutively required for A.fumigatus to cope with the temperature increase found in the mammalian lung environment, during infection. This Aspergillus fumigatus (strain ATCC MYA-4609 / CBS 101355 / FGSC A1100 / Af293) (Neosartorya fumigata) protein is Mitogen-activated protein kinase kinae kinase bck1.